A 406-amino-acid polypeptide reads, in one-letter code: Linalool 8-monooxygenase (406 aa).

Cys-355 lines the heme pocket.

It belongs to the cytochrome P450 family. Heme is required as a cofactor.

It catalyses the reaction linalool + 2 reduced [NADPH--hemoprotein reductase] + 2 O2 = (6E)-8-oxolinalool + 2 oxidized [NADPH--hemoprotein reductase] + 3 H2O + 2 H(+). It functions in the pathway terpene metabolism; linalool degradation. Functionally, catalyzes the 8-methyl hydroxylation of linalool. This chain is Linalool 8-monooxygenase (linC), found in Pseudomonas putida (Arthrobacter siderocapsulatus).